The primary structure comprises 393 residues: Methylthioribose kinase (393 aa).

ATP-binding positions include asparagine 38, lysine 53, and 107-109 (EDL). Aspartate 225 is a substrate binding site. ATP is bound at residue 242 to 244 (DPE). Arginine 332 contacts substrate.

This sequence belongs to the methylthioribose kinase family. In terms of assembly, homodimer.

The catalysed reaction is 5-(methylsulfanyl)-D-ribose + ATP = 5-(methylsulfanyl)-alpha-D-ribose 1-phosphate + ADP + H(+). The protein operates within amino-acid biosynthesis; L-methionine biosynthesis via salvage pathway; S-methyl-5-thio-alpha-D-ribose 1-phosphate from S-methyl-5'-thioadenosine (hydrolase route): step 2/2. In terms of biological role, catalyzes the phosphorylation of methylthioribose into methylthioribose-1-phosphate. The sequence is that of Methylthioribose kinase from Bacillus cereus (strain B4264).